The chain runs to 117 residues: Large ribosomal subunit protein bL20c (117 aa).

Belongs to the bacterial ribosomal protein bL20 family.

Its subcellular location is the plastid. It is found in the chloroplast. Functionally, binds directly to 23S ribosomal RNA and is necessary for the in vitro assembly process of the 50S ribosomal subunit. It is not involved in the protein synthesizing functions of that subunit. The polypeptide is Large ribosomal subunit protein bL20c (Barbarea verna (Land cress)).